A 224-amino-acid chain; its full sequence is UPF0758 protein VSAL_I0192 (224 aa).

The 123-residue stretch at 102–224 (ALTSPEHTKR…IVSFAERGWI (123 aa)) folds into the MPN domain. Positions 173, 175, and 186 each coordinate Zn(2+). The JAMM motif signature appears at 173–186 (HNHPSGVAEPSQAD).

This sequence belongs to the UPF0758 family.

The sequence is that of UPF0758 protein VSAL_I0192 from Aliivibrio salmonicida (strain LFI1238) (Vibrio salmonicida (strain LFI1238)).